Here is a 374-residue protein sequence, read N- to C-terminus: UPF0754 membrane protein SAR1937 (374 aa).

A run of 2 helical transmembrane segments spans residues 4-24 and 354-374; these read LFII…TNVI and SLGF…AIFV.

This sequence belongs to the UPF0754 family.

Its subcellular location is the cell membrane. The protein is UPF0754 membrane protein SAR1937 of Staphylococcus aureus (strain MRSA252).